An 82-amino-acid chain; its full sequence is Putative membrane protein insertion efficiency factor (82 aa).

The tract at residues 63–82 (GGFDPVPLKKDKNSKTTHHH) is disordered.

It belongs to the UPF0161 family.

Its subcellular location is the cell membrane. Its function is as follows. Could be involved in insertion of integral membrane proteins into the membrane. This chain is Putative membrane protein insertion efficiency factor, found in Staphylococcus epidermidis (strain ATCC 35984 / DSM 28319 / BCRC 17069 / CCUG 31568 / BM 3577 / RP62A).